We begin with the raw amino-acid sequence, 241 residues long: Polyol phosphate phosphatase PYP1 (241 aa).

Residue aspartate 9 is the Nucleophile of the active site. Positions 9, 11, and 179 each coordinate Mg(2+). Aspartate 11 functions as the Proton donor in the catalytic mechanism.

It belongs to the HAD-like hydrolase superfamily. It depends on Mg(2+) as a cofactor.

It localises to the cytoplasm. It is found in the nucleus. The enzyme catalyses D-ribitol 5-phosphate + H2O = ribitol + phosphate. It carries out the reaction D-sorbitol 6-phosphate + H2O = D-sorbitol + phosphate. It catalyses the reaction sn-glycerol 1-phosphate + H2O = glycerol + phosphate. The catalysed reaction is D-erythrose 4-phosphate + H2O = D-erythrose + phosphate. Hydrolyzes sugar alcohol (polyol) phosphates. Dephosphorylates a variety of substrates, including: sn-glycerol 1-phosphate (D-glycerol 3-phosphate), D-ribitol 5-phosphate, D-sorbitol 6-phosphate (D-glucitol 6-phosphate), and D-erythrose 4-phosphate. Prevents accumulation of toxic levels of polyol phosphates, which can impair glycolysis by inhibiting glucose-6-phosphate isomerase. This Saccharomyces cerevisiae (strain ATCC 204508 / S288c) (Baker's yeast) protein is Polyol phosphate phosphatase PYP1.